A 692-amino-acid chain; its full sequence is E3 ubiquitin-protein ligase MARCHF7 (692 aa).

An N-acetylmethionine modification is found at methionine 1. Disordered regions lie at residues methionine 1 to serine 165, serine 201 to threonine 280, phenylalanine 296 to glutamate 343, leucine 360 to arginine 425, serine 440 to glycine 474, and serine 512 to leucine 532. Residues tyrosine 37–serine 48 are compositionally biased toward basic and acidic residues. Composition is skewed to polar residues over residues proline 61–glutamine 83 and serine 95–valine 132. The span at leucine 140–serine 153 shows a compositional bias: basic and acidic residues. Residues serine 201–proline 214 are compositionally biased toward polar residues. Residues serine 215–serine 233 are compositionally biased toward low complexity. Polar residues predominate over residues serine 235 to serine 272. Residues phenylalanine 296 to serine 305 are compositionally biased toward low complexity. Polar residues predominate over residues leucine 306–valine 336. Phosphoserine occurs at positions 318 and 389. Over residues alanine 450 to serine 462 the composition is skewed to low complexity. The span at glycine 516 to leucine 532 shows a compositional bias: basic and acidic residues. The RING-CH-type zinc-finger motif lies at aspartate 545 to asparagine 615. Positions 553, 556, 571, 573, 581, 584, 605, and 608 each coordinate Zn(2+). Threonine 687 is subject to Phosphothreonine. A Phosphoserine modification is found at serine 688.

It is found in the cytoplasm. The enzyme catalyses S-ubiquitinyl-[E2 ubiquitin-conjugating enzyme]-L-cysteine + [acceptor protein]-L-lysine = [E2 ubiquitin-conjugating enzyme]-L-cysteine + N(6)-ubiquitinyl-[acceptor protein]-L-lysine.. Its pathway is protein modification; protein ubiquitination. E3 ubiquitin-protein ligase which may specifically enhance the E2 activity of HIP2. E3 ubiquitin ligases accept ubiquitin from an E2 ubiquitin-conjugating enzyme in the form of a thioester and then directly transfer the ubiquitin to targeted substrates. May be involved in T-cell proliferation by regulating LIF secretion. May play a role in lysosome homeostasis. Promotes 'Lys-6', 'Lys-11' and 'Lys-63'-linked mixed polyubiquitination on ATG14 leading to the inhibition of autophagy by impairing the interaction between ATG14 and STX7. Participates in the dopamine-mediated negative regulation of the NLRP3 inflammasome by promoting its uibiquitination and subsequent degradation. The chain is E3 ubiquitin-protein ligase MARCHF7 (Marchf7) from Rattus norvegicus (Rat).